Consider the following 712-residue polypeptide: MDALIRAGSEIDAHDTALRGPLPPEAPLAMPEQSFAAAPDREADRAAAAAPNEWRRLAIMLATAALTCAGGYEMYQVLQVGGVTILEGIVLALFAALFAWVALSFVSALAGFVALLSGWHDDLGVAADGPLPAISNRIAMLLPIYNEQPQAVFARLQATRESVELTGHGAQFDWFILSDTTDPAVWIAEEKCYLALASSGERLFYRHRQFNHARKSGNIEDWVKRFGAGYDCIVILDADSMMTGEALVRLAAAMQRHPDVGLIQTLPIVVKARTLFARLQQFAGRMYGPMIASGIAWWHGSESNYWGHNAIIRVAAFAACTGLPSLPGRKPFGGHILSHDFVEAALLRRAGWRIHMAPTLPGSYEECPPSLLDFAARDRRWCQGNLQHAKLLKARGLHWVSRLHFLTGIGSYITAPMWLAFLVAGILISLQAQFVRPEYFPKGYSLFPDWPAQDPVRAAWVFAGTMGLLMMPKLLALILVVIRRESRRGFGGAARAAAGVVTETLISSLTAPVMMIFQSTAIAEILLGRDAGWNVQHRGDGAIPLREIARRYAAPSWLGAVMAVSALLVSWPLLLWMMPVILGLVLAIPVALLTSRTLAKHRAGAMLATPEDAEPPILSRAGEIAATLRDASPAEDPLLQLRNDPVLRELHFAGLAHQPARPRGRVDPALALARAQIDDAACIAEVVDWLDPREKHAVMGSRDTLQRIMRMP.

6 helical membrane-spanning segments follow: residues 57–77 (LAIM…MYQV), 89–109 (IVLA…VSAL), 408–428 (GIGS…GILI), 462–482 (FAGT…LVVI), 552–572 (YAAP…VSWP), and 573–593 (LLLW…VALL).

This sequence belongs to the glycosyltransferase 2 family. OpgH subfamily.

Its subcellular location is the cell inner membrane. The protein operates within glycan metabolism; osmoregulated periplasmic glucan (OPG) biosynthesis. In terms of biological role, involved in the biosynthesis of osmoregulated periplasmic glucans (OPGs). This Rhodopseudomonas palustris (strain BisA53) protein is Glucans biosynthesis glucosyltransferase H.